We begin with the raw amino-acid sequence, 424 residues long: MPLLWLRGFLLASCWIIVRSSPTPGSEGHGSAPDCPSCALATLPKDGPNSQPEMVEAVKKHILNMLHLKKRPDVTQPVPKAALLNAIRKLHVGKVGENGYVEIEDDIGRRAEMNELMEQTSEIITFAESGTARKTLHFEISKEGSDLSVVERAEVWLFLKVPKANRTRTKVTIRLFQQQKHPQGSLDTGDEAEEMGLKGERSELLLSEKVVDARKSTWHIFPVSSSIQRLLDQGKSSLDVRIACEQCQESGASLVLLGKKKKKEVDGDGKKKDGSDGGLEEEKEQSHRPFLMLQARQSEDHPHRRRRRGLECDGKVNICCKKQFFVSFKDIGWNDWIIAPSGYHANYCEGECPSHIAGTSGSSLSFHSTVINHYRMRGHSPFANLKSCCVPTKLRPMSMLYYDDGQNIIKKDIQNMIVEECGCS.

A signal peptide spans 1–20 (MPLLWLRGFLLASCWIIVRS). Residues 21–308 (SPTPGSEGHG…EDHPHRRRRR (288 aa)) constitute a propeptide that is removed on maturation. Asn-165 is a glycosylation site (N-linked (GlcNAc...) asparagine). Positions 264–275 (EVDGDGKKKDGS) are enriched in basic and acidic residues. A disordered region spans residues 264-306 (EVDGDGKKKDGSDGGLEEEKEQSHRPFLMLQARQSEDHPHRRR). 4 cysteine pairs are disulfide-bonded: Cys-312–Cys-320, Cys-319–Cys-389, Cys-348–Cys-421, and Cys-352–Cys-423.

The protein belongs to the TGF-beta family. Dimeric, linked by one or more disulfide bonds. Inhibin A is a dimer of alpha/INHA and beta-A/INHBA. Activin A is a homodimer of beta-A/INHBA. Activin AB is a dimer of beta-A/INHBA and beta-B/INHBB. Interacts with FST and FSTL3; these interactions prevent activin A interaction to its type II receptor. Activin A interacts with ACVR2A. Activin A interacts with BMPR2. Inhibin A interacts with ACVR1; this interaction creates a non-signaling complex (NSC) that inhibits ACVR1-mediated BMP signaling. Inhibin A interacts with ACVR2A. In terms of tissue distribution, uterus, ovary and liver.

It localises to the secreted. Inhibins/activins are involved in regulating a number of diverse functions such as hypothalamic and pituitary hormone secretion, gonadal hormone secretion, germ cell development and maturation, erythroid differentiation, insulin secretion, nerve cell survival, embryonic axial development or bone growth, depending on their subunit composition. In terms of biological role, activin A is a homodimer of INHBA that plays a role in several essential biological processes including embryonic development, stem cell maintenance and differentiation, haematopoiesis, cell proliferation and tissue fibrosis. Signals through type I (such as ACVR1B or ACVR1C) and type II receptors (such as ACVR2A, ACVR2B or BMPR2) which, upon ligand binding, phosphorylate SMAD2 and SMAD3 intracellular signaling mediators that form a complex with SMAD4, translocate to the nucleus and modulate gene expression. Can also activate alternative non-canonical intracellular signaling pathways including the p38 MAPK, extracellular signal-regulated kinases 1/2 (ERK1/2) and c-Jun N-terminal kinases (JNKs) to modulate cell migration and differentiation. Alternatively, promotes osteoblastic differentiation via ACVRL1-SMAD1/5/9 pathway. In addition, can engage the type I receptor ACVR1 to form an ACVR1-activin A-type II receptor non-signaling complex (NSC) that renders receptors unavailable for engagement with BMPs, hence resulting in an apparent inhibition of ACVR1-mediated BMP signaling. Functionally, inhibin A is a dimer of alpha/INHA and beta-A/INHBA that functions as a feedback regulator in the hypothalamic-pituitary-gonadal (HPG) axis. Inhibits the secretion of FSH from the anterior pituitary gland by acting on pituitary gonadotrope cells. Antagonizes activin A by binding to the proteoglycan, betaglycan, and forming a stable complex with and, thereby, sequestering type II activin receptors while excluding type I receptor. This chain is Inhibin beta A chain (Inhba), found in Mus musculus (Mouse).